Here is a 1555-residue protein sequence, read N- to C-terminus: Bromodomain adjacent to zinc finger domain protein 1A (1555 aa).

A required for association with the CHRAC1/POLE3 complex region spans residues 1 to 128 (MPLLHRKPFV…EETVEVIRNN (128 aa)). A required for interaction with the CHRAC1-POLE3 heterodimer. Required for interaction with the CHRAC1-POLE3 heterodimer region spans residues 1–128 (MPLLHRKPFV…EETVEVIRNN (128 aa)). Positions 1–133 (MPLLHRKPFV…VIRNNGTRLQ (133 aa)) are required for interaction with NCOR1. Residues 22–128 (EEVFYCKVTN…EETVEVIRNN (107 aa)) enclose the WAC domain. Ser270 and Ser284 each carry phosphoserine. In terms of domain architecture, DDT spans 422-488 (PEVFGDALMV…LTAIFQAMAE (67 aa)). Residues 635-701 (IEDYVDVLRQ…EDEQRNSAAV (67 aa)) adopt a coiled-coil conformation. Basic and acidic residues-rich tracts occupy residues 652 to 664 (LKAE…REAT) and 671 to 696 (RKEE…DEQR). The disordered stretch occupies residues 652-751 (LKAEQHRKER…KRSRRGKVGQ (100 aa)). An interaction with SMARCA5 region spans residues 668 to 935 (IRRRKEEKLK…QEKSRICAQL (268 aa)). The interval 668 to 935 (IRRRKEEKLK…QEKSRICAQL (268 aa)) is required for interaction with SMARCA5 and formation of the CHRAC ISWI chromatin remodeling complex. Acidic residues-rich tracts occupy residues 705–714 (GEEEREDFDT) and 728–737 (PDVVTEDEDD). Thr732 is modified (phosphothreonine). Positions 773–798 (SADAEEALRQEQQQKEKELLDKIQSA) form a coiled coil. Disordered stretches follow at residues 843–874 (PSSF…SSLD) and 944–969 (HFSD…CDIS). Residues 864–873 (SFLSESTSSL) are compositionally biased toward low complexity. A Glycyl lysine isopeptide (Lys-Gly) (interchain with G-Cter in SUMO2) cross-link involves residue Lys954. Residues Ser962 and Ser963 each carry the phosphoserine modification. A PHD-type zinc finger spans residues 1149–1199 (NARCKICRKKGDAENMVLCDGCDRGHHTYCVRPKLKAVPDGDWFCPECRPK). A disordered region spans residues 1203 to 1429 (RRLSSRQRPS…LNRRSSGRQG (227 aa)). A compositionally biased stretch (acidic residues) spans 1214-1258 (ESDEEMEEGMEDDDDEVDDDDEEGQSEEEEYEVEQDEEDSDDDEA). Residues 1263 to 1277 (KRGRPQVRLPIKTKG) are compositionally biased toward basic residues. Phosphoserine is present on Ser1282. Polar residues predominate over residues 1297–1313 (SRSQQSTPKNTAKSASK). Phosphoserine occurs at positions 1320, 1339, 1352, 1370, 1401, 1412, and 1416. The segment covering 1369-1386 (HSPSFTNFRVSTSRSSRQ) has biased composition (polar residues). In terms of domain architecture, Bromo spans 1429–1532 (GGVHELSAFE…AFFHIQAQKL (104 aa)). Thr1546 bears the Phosphothreonine mark.

The protein belongs to the WAL family. In terms of assembly, component of the ACF-1 ISWI chromatin remodeling complex at least composed of SMARCA1 and BAZ1A, which regulates the spacing of histone octamers on the DNA template to facilitate access to DNA. Within the ACF-1 ISWI chromatin remodeling complex interacts with SMARCA1; the interaction is direct. Component of the ACF-5 ISWI chromatin remodeling complex (also called the ACF complex) at least composed of BAZ1A and SMARCA5/SNF2H, which regulates the spacing of histone octamers on the DNA template to facilitate access to DNA. Within the ACF-5 ISWI chromatin remodeling complex interacts with SMARCA5/SNF2H; the interaction is direct. Component of the CHRAC ISWI chromatin remodeling complex at least composed of SMARCA5/SNF2H, BAZ1A/ACF1, CHRAC1 and POLE3; the complex preferentially binds DNA through the CHRAC1-POLE3 heterodimer and possesses ATP-dependent nucleosome-remodeling activity. Within the complex interacts (via N-terminus) with POLE3-CHRAC1 heterodimer; the interaction is direct and is required for the complex to preferentially bind to DNA. Within the complex interacts with SMARCA5/SNF2H; the interaction is direct and promotes the interaction with the POLE3-CHRAC1 heterodimer. Interacts with NCOR1 (via its RD1 domain); the interaction corepresses a number of NCOR1-regulated genes.

It is found in the nucleus. In terms of biological role, regulatory subunit of the ATP-dependent ACF-1 and ACF-5 ISWI chromatin remodeling complexes, which form ordered nucleosome arrays on chromatin and slide edge- and center-positioned histone octamers away from their original location on the DNA template to facilitate access to DNA during DNA-templated processes such as DNA replication, transcription, and repair. Both complexes regulate the spacing of nucleosomes along the chromatin and have the ability to slide mononucleosomes to the center of a DNA template in an ATP-dependent manner. The ACF-1 ISWI chromatin remodeling complex has a lower ATP hydrolysis rate than the ACF-5 ISWI chromatin remodeling complex. Has a role in sensing the length of DNA which flank nucleosomes, which modulates the nucleosome spacing activity of the ACF-5 ISWI chromatin remodeling complex. Involved in DNA replication and together with SMARCA5/SNF2H is required for replication of pericentric heterochromatin in S-phase. May have a role in nuclear receptor-mediated transcription repression. The polypeptide is Bromodomain adjacent to zinc finger domain protein 1A (Baz1a) (Mus musculus (Mouse)).